Here is a 123-residue protein sequence, read N- to C-terminus: MIQPQTLLNVADNSGARKLMCIRVIGAASNQRYARIGDVIVAVIKDAVPQMPLERSEVIRAVIVRTCKEFKCEDGIIIRYDDNAAVIIDQKGNPKGTRVFGAIAEELRELNFTKIVSLAPEVL.

It belongs to the universal ribosomal protein uL14 family. As to quaternary structure, part of the 50S ribosomal subunit.

The protein localises to the plastid. The protein resides in the chloroplast. Functionally, binds to 23S rRNA. This Oryza nivara (Indian wild rice) protein is Large ribosomal subunit protein uL14c.